The chain runs to 457 residues: ERV-H1 provirus ancestral Env polyprotein (457 aa).

The N-terminal stretch at 1 to 35 (MIFAGKAPSNTSTLMKFYSLILYSLLFSFPFLCHP) is a signal peptide. N-linked (GlcNAc...) asparagine glycans are attached at residues Asn-10 and Asn-47. Positions 64-67 (CWLC) match the CXXC motif. N-linked (GlcNAc...) asparagine glycosylation is found at Asn-197, Asn-222, Asn-265, Asn-283, Asn-352, and Asn-370. Residues 388 to 408 (VIPLIPLMFGLGLSASTIALS) are fusion peptide.

The protein belongs to the gamma type-C retroviral envelope protein family. HERV class-I H env subfamily. In terms of assembly, the surface (SU) and transmembrane (TM) proteins form a heterodimer. SU and TM are attached by noncovalent interactions or by a labile interchain disulfide bond. Specific enzymatic cleavages in vivo yield the mature SU and TM proteins. Post-translationally, the CXXC motif is highly conserved across a broad range of retroviral envelope proteins. It is thought to participate in the formation of a labile disulfide bond possibly with the CX6CC motif present in the transmembrane protein.

It is found in the virion. Retroviral envelope proteins mediate receptor recognition and membrane fusion during early infection. Endogenous envelope proteins may have kept, lost or modified their original function during evolution. Its function is as follows. SU mediates receptor recognition. In terms of biological role, TM anchors the envelope heterodimer to the viral membrane through one transmembrane domain. The other hydrophobic domain, called fusion peptide, mediates fusion of the viral membrane with the target cell membrane. The polypeptide is ERV-H1 provirus ancestral Env polyprotein (Pan troglodytes (Chimpanzee)).